The chain runs to 128 residues: MRFTLMVTGPAYGTQQASSALQFAKALLAEGHSLESVFFYREGVYNANQFTSPASDEFDLVRAWQQLHDENGVALHICVAAALRRGVTDENEARAQGLPGANLQPGFQLSGLGALAEAALTCDRVVEF.

The active-site Cysteine persulfide intermediate is the Cys-78.

It belongs to the DsrE/TusD family. In terms of assembly, heterohexamer, formed by a dimer of trimers. The hexameric TusBCD complex contains 2 copies each of TusB, TusC and TusD. The TusBCD complex interacts with TusE.

It localises to the cytoplasm. Functionally, part of a sulfur-relay system required for 2-thiolation of 5-methylaminomethyl-2-thiouridine (mnm(5)s(2)U) at tRNA wobble positions. Accepts sulfur from TusA and transfers it in turn to TusE. The polypeptide is Sulfurtransferase TusD (Cronobacter sakazakii (strain ATCC BAA-894) (Enterobacter sakazakii)).